A 118-amino-acid polypeptide reads, in one-letter code: NLYQLKNMIKCTNTRHWVSFTNYGCYCGYGGSGTPVDELDKCCQVHDKCYDTAKHVCKCSPSMTMYSYDCSEGKLTCKDNNTKCKDFVCNCDRTAALCFAKAPYNNKNFKIDPTKGCQ.

Disulfide bonds link Cys11–Cys70, Cys25–Cys117, Cys27–Cys43, Cys42–Cys98, Cys49–Cys91, Cys59–Cys84, and Cys77–Cys89. Residues Tyr26, Gly28, and Gly30 each contribute to the Ca(2+) site. His46 is a catalytic residue. Asp47 contributes to the Ca(2+) binding site. The active site involves Asp92.

The protein belongs to the phospholipase A2 family. Group I subfamily. D49 sub-subfamily. Requires Ca(2+) as cofactor. In terms of tissue distribution, expressed by the venom gland.

Its subcellular location is the secreted. The catalysed reaction is a 1,2-diacyl-sn-glycero-3-phosphocholine + H2O = a 1-acyl-sn-glycero-3-phosphocholine + a fatty acid + H(+). Functionally, snake venom phospholipase A2 (PLA2) that has only a weak enzymatic activity. It has a myotoxic activity in vivo (dystrophic effect). PLA2 catalyzes the calcium-dependent hydrolysis of the 2-acyl groups in 3-sn-phosphoglycerides. This is Basic phospholipase A2 nigroxin A from Micrurus nigrocinctus (Central American coral snake).